Here is a 530-residue protein sequence, read N- to C-terminus: Autoinducer-2 kinase (530 aa).

Belongs to the FGGY kinase family.

The protein localises to the cytoplasm. The catalysed reaction is (S)-4,5-dihydroxypentane-2,3-dione + ATP = (2S)-2-hydroxy-3,4-dioxopentyl phosphate + ADP + H(+). Functionally, catalyzes the phosphorylation of autoinducer-2 (AI-2) to phospho-AI-2, which subsequently inactivates the transcriptional regulator LsrR and leads to the transcription of the lsr operon. Phosphorylates the ring-open form of (S)-4,5-dihydroxypentane-2,3-dione (DPD), which is the precursor to all AI-2 signaling molecules, at the C5 position. The polypeptide is Autoinducer-2 kinase (Salmonella typhimurium (strain LT2 / SGSC1412 / ATCC 700720)).